The chain runs to 102 residues: UPF0213 protein Ent638_3592 (102 aa).

In terms of domain architecture, GIY-YIG spans 4 to 79 (VCWFLYLVRT…KQLTKRQKER (76 aa)).

The protein belongs to the UPF0213 family.

This is UPF0213 protein Ent638_3592 from Enterobacter sp. (strain 638).